A 357-amino-acid chain; its full sequence is Phosphoribosylformylglycinamidine cyclo-ligase (357 aa).

The protein belongs to the AIR synthase family.

Its subcellular location is the cytoplasm. The enzyme catalyses 2-formamido-N(1)-(5-O-phospho-beta-D-ribosyl)acetamidine + ATP = 5-amino-1-(5-phospho-beta-D-ribosyl)imidazole + ADP + phosphate + H(+). The protein operates within purine metabolism; IMP biosynthesis via de novo pathway; 5-amino-1-(5-phospho-D-ribosyl)imidazole from N(2)-formyl-N(1)-(5-phospho-D-ribosyl)glycinamide: step 2/2. This is Phosphoribosylformylglycinamidine cyclo-ligase from Allorhizobium ampelinum (strain ATCC BAA-846 / DSM 112012 / S4) (Agrobacterium vitis (strain S4)).